The sequence spans 142 residues: Large ribosomal subunit protein uL13 (142 aa).

This sequence belongs to the universal ribosomal protein uL13 family. Part of the 50S ribosomal subunit.

This protein is one of the early assembly proteins of the 50S ribosomal subunit, although it is not seen to bind rRNA by itself. It is important during the early stages of 50S assembly. This Akkermansia muciniphila (strain ATCC BAA-835 / DSM 22959 / JCM 33894 / BCRC 81048 / CCUG 64013 / CIP 107961 / Muc) protein is Large ribosomal subunit protein uL13.